Consider the following 610-residue polypeptide: UvrABC system protein C (610 aa).

A GIY-YIG domain is found at 16-94; it reads SQPGVYRMYD…IKLYQPRYNV (79 aa). In terms of domain architecture, UVR spans 204–239; the sequence is DQVLTQLISRMETASQNLEFEEAARIRDQIQAVRRV.

The protein belongs to the UvrC family. In terms of assembly, interacts with UvrB in an incision complex.

Its subcellular location is the cytoplasm. In terms of biological role, the UvrABC repair system catalyzes the recognition and processing of DNA lesions. UvrC both incises the 5' and 3' sides of the lesion. The N-terminal half is responsible for the 3' incision and the C-terminal half is responsible for the 5' incision. This is UvrABC system protein C from Escherichia coli O139:H28 (strain E24377A / ETEC).